A 246-amino-acid chain; its full sequence is tRNA (guanine-N(1)-)-methyltransferase (246 aa).

S-adenosyl-L-methionine-binding positions include Gly-113 and Ile-133–Leu-138.

This sequence belongs to the RNA methyltransferase TrmD family. Homodimer.

It localises to the cytoplasm. The enzyme catalyses guanosine(37) in tRNA + S-adenosyl-L-methionine = N(1)-methylguanosine(37) in tRNA + S-adenosyl-L-homocysteine + H(+). Functionally, specifically methylates guanosine-37 in various tRNAs. The sequence is that of tRNA (guanine-N(1)-)-methyltransferase from Yersinia pseudotuberculosis serotype O:1b (strain IP 31758).